Reading from the N-terminus, the 73-residue chain is uncharacterized protein (73 aa).

This is an uncharacterized protein from Saccharomyces cerevisiae (strain ATCC 204508 / S288c) (Baker's yeast).